The primary structure comprises 273 residues: Dermonecrotic toxin LsaSicTox-alphaIB1aiii (273 aa).

The active site involves histidine 5. Mg(2+)-binding residues include glutamate 25 and aspartate 27. The Nucleophile role is filled by histidine 41. Intrachain disulfides connect cysteine 45/cysteine 51 and cysteine 47/cysteine 190. Aspartate 85 is a Mg(2+) binding site.

Belongs to the arthropod phospholipase D family. Class II subfamily. Mg(2+) serves as cofactor. In terms of tissue distribution, expressed by the venom gland.

Its subcellular location is the secreted. The enzyme catalyses an N-(acyl)-sphingosylphosphocholine = an N-(acyl)-sphingosyl-1,3-cyclic phosphate + choline. It carries out the reaction an N-(acyl)-sphingosylphosphoethanolamine = an N-(acyl)-sphingosyl-1,3-cyclic phosphate + ethanolamine. It catalyses the reaction a 1-acyl-sn-glycero-3-phosphocholine = a 1-acyl-sn-glycero-2,3-cyclic phosphate + choline. The catalysed reaction is a 1-acyl-sn-glycero-3-phosphoethanolamine = a 1-acyl-sn-glycero-2,3-cyclic phosphate + ethanolamine. In terms of biological role, dermonecrotic toxins cleave the phosphodiester linkage between the phosphate and headgroup of certain phospholipids (sphingolipid and lysolipid substrates), forming an alcohol (often choline) and a cyclic phosphate. This toxin acts on sphingomyelin (SM). It may also act on ceramide phosphoethanolamine (CPE), lysophosphatidylcholine (LPC) and lysophosphatidylethanolamine (LPE), but not on lysophosphatidylserine (LPS), and lysophosphatidylglycerol (LPG). It acts by transphosphatidylation, releasing exclusively cyclic phosphate products as second products. Induces dermonecrosis, hemolysis, increased vascular permeability, edema, inflammatory response, and platelet aggregation. The sequence is that of Dermonecrotic toxin LsaSicTox-alphaIB1aiii from Loxosceles sabina (Tucson recluse spider).